The chain runs to 1719 residues: Sodium channel protein type 4 subunit alpha B (1719 aa).

The Cytoplasmic portion of the chain corresponds to 1-126 (MRTLLPPVGS…IVAIKILIHS (126 aa)). The tract at residues 28–50 (QQIREEERKRTNAQVSEELPEPA) is disordered. One copy of the I repeat lies at 108 to 431 (LLSPFNALRI…VVAMAYAEQN (324 aa)). The chain crosses the membrane as a helical span at residues 127 to 145 (LFSLFIMATILTNCAFMTL). Residues 146–152 (SDPPAWS) are Extracellular-facing. Residues 153 to 173 (KTMEYVFTFIYTFEATIKILS) traverse the membrane as a helical segment. The Cytoplasmic portion of the chain corresponds to 174 to 187 (RGFCVGKFTFLKDP). The chain crosses the membrane as a helical span at residues 188-205 (WNWLDFMVISMAYLTELV). At 206 to 211 (DLGNVS) the chain is on the extracellular side. N-linked (GlcNAc...) asparagine glycosylation occurs at Asn-209. The chain crosses the membrane as a helical span at residues 212–228 (VLRTFRVLRALKTITVI). Residues 229-247 (PGLKTIVGALIQSVRKLAD) are Cytoplasmic-facing. Residues 248-267 (AMVLTVFCLSVFALIGLQLF) traverse the membrane as a helical segment. Residues 268 to 368 (MGNLRQKCVL…PNYGYTSYDS (101 aa)) lie on the Extracellular side of the membrane. Cysteines 275 and 337 form a disulfide. Residues Asn-285 and Asn-339 are each glycosylated (N-linked (GlcNAc...) asparagine). A disulfide bridge links Cys-346 with Cys-352. An intramembrane region (pore-forming) is located at residues 369–393 (FGWAFLALFRLMTQDFWENLFQLTL). Over 394–400 (RTAGKTY) the chain is Extracellular. A helical membrane pass occupies residues 401–421 (MIFFVVVIFLGSFYLINLILA). Residues 422–513 (VVAMAYAEQN…ECLYAIVMDP (92 aa)) lie on the Cytoplasmic side of the membrane. The stretch at 495–766 (CCGCWRHLKE…QIAINRINRA (272 aa)) is one II repeat. A helical transmembrane segment spans residues 514-532 (FVDLGITICIILNTVFMAM). Residues 533 to 543 (EHYPMSADFEE) lie on the Extracellular side of the membrane. Residues 544–563 (LLSVGNLVFTGIFTGEMVFK) form a helical membrane-spanning segment. Over 564–577 (ILAMDPYFYFQVGW) the chain is Cytoplasmic. Residues 578 to 597 (NIFDSIIVTISLVELGLANV) form a helical membrane-spanning segment. Over 598–599 (QG) the chain is Extracellular. The chain crosses the membrane as a helical span at residues 600-617 (LSVLRSFRLMRVFKLAKS). Residues 618-633 (WPTLNMLIKIIGNSVG) are Cytoplasmic-facing. A helical transmembrane segment spans residues 634–652 (ALGNLTLVLAIIVFIFAVV). Topologically, residues 653 to 681 (GMQLFGKNYKDCVCRISEDCVLPRWHMND) are extracellular. An intrachain disulfide couples Cys-666 to Cys-672. The pore-forming intramembrane region spans 682-702 (FFHAFLIIFRVLCGEWIESMW). The Extracellular portion of the chain corresponds to 703 to 713 (DCMEVSGQTMC). An intrachain disulfide couples Cys-704 to Cys-713. The chain crosses the membrane as a helical span at residues 714–732 (LIVFMMVLVIGNLVVLNLF). Topologically, residues 733 to 919 (LALLLSSFSG…TCFSIVENNY (187 aa)) are cytoplasmic. The span at 834–845 (SDSDDSDYDEDK) shows a compositional bias: acidic residues. The disordered stretch occupies residues 834-862 (SDSDDSDYDEDKDSQCDESSVCSSVQKPE). The stretch at 900-1215 (RGKIWCNIRR…KKYYNAMKKL (316 aa)) is one III repeat. The chain crosses the membrane as a helical span at residues 920 to 937 (FESFIVFMILLSSGALAF). At 938–950 (EDIYLEKHQLIKS) the chain is on the extracellular side. Residues 951–969 (ILEYADKVFTYVFVMEMVL) traverse the membrane as a helical segment. Topologically, residues 970–983 (KWFAYGFKSYFSNA) are cytoplasmic. The chain crosses the membrane as a helical span at residues 984–1002 (WCWLDFLIVDVSLVSLTAN). Over 1003–1010 (ILGYSELG) the chain is Extracellular. The helical transmembrane segment at 1011 to 1029 (AIKSLRTLRALRPLRALSR) threads the bilayer. Topologically, residues 1030 to 1046 (FEGMRVVVNALVGAVPS) are cytoplasmic. A helical membrane pass occupies residues 1047-1066 (IFNVLLVCLIFWLIFSIMGV). Over 1067–1119 (NLFAGKFSYCFNETSQEIIDTKVVDNKTECIALIKANFTEVRWKNVKVNYDNV) the chain is Extracellular. Cysteines 1076 and 1096 form a disulfide. Asn-1078 and Asn-1092 each carry an N-linked (GlcNAc...) asparagine glycan. An intramembrane region (pore-forming) is located at residues 1120–1141 (GIGYLSLLQVATFKGWTDIMYA). Over 1142–1158 (AVDSRDVESQPIYEVNL) the chain is Extracellular. Residues 1159–1180 (YMYLYFVIFIIFGSFFTLNLFI) traverse the membrane as a helical segment. The Cytoplasmic segment spans residues 1181 to 1243 (GVIIDNFNQQ…LVFDLVTKQI (63 aa)). The segment at 1199–1201 (IFM) is important for rapid channel inactivation. Residues 1224–1521 (VPRPENPFQG…WEKFDPDASQ (298 aa)) form an IV repeat. The helical transmembrane segment at 1244-1261 (FDVFIMVLICLNMVTMMV) threads the bilayer. The Extracellular segment spans residues 1262-1272 (ETDEQSDKKEE). Residues 1273–1291 (VLYWINVVFILIFTTECTL) traverse the membrane as a helical segment. Residues 1292 to 1303 (KIIALRRHYFSI) are Cytoplasmic-facing. The helical transmembrane segment at 1304–1321 (GWNIFDFVVVILSILGLL) threads the bilayer. The Extracellular segment spans residues 1322 to 1334 (LADIIEKYFVSPT). Residues 1335 to 1351 (LFRVIRLARIGRVLRLI) form a helical membrane-spanning segment. Residues 1352–1370 (RGAKGIRTLLFALMMSLPA) lie on the Cytoplasmic side of the membrane. A helical membrane pass occupies residues 1371–1388 (LFNIGLLLFLIMFIFSIF). Over 1389–1410 (GMSNFAYVKKEALIDDMFNFET) the chain is Extracellular. Residues 1411–1433 (FGNSMICLFMITTSAGWDGLLSP) constitute an intramembrane region (pore-forming). At 1434 to 1462 (IMNTPPDCDPNVENPGTTVRGNCGSPAIG) the chain is on the extracellular side. Cys-1441 and Cys-1456 are oxidised to a cystine. Residues 1463–1485 (IAFFSTYIIMSFLVVVNMFIAII) form a helical membrane-spanning segment. At 1486 to 1719 (LENFNVATEE…QERDQRETSV (234 aa)) the chain is on the cytoplasmic side. Positions 1615 to 1644 (EEVAATVIQRAYRKYLLLRTVRLASFMYRE) constitute an IQ domain.

This sequence belongs to the sodium channel (TC 1.A.1.10) family. Nav1.4/SCN4A subfamily. In terms of assembly, voltage-gated sodium (Nav) channels consist of an ion-conducting alpha subunit which is functional on its own associated with regulatory beta subunits.

It is found in the cell membrane. The catalysed reaction is Na(+)(in) = Na(+)(out). In terms of biological role, pore-forming subunit of a voltage-gated sodium (Nav) channel that directly mediates the depolarizing phase of action potentials in excitable membranes. Navs, also called VGSCs (voltage-gated sodium channels) or VDSCs (voltage-dependent sodium channels), operate by switching between closed and open conformations depending on the voltage difference across the membrane. In the open conformation they allow Na(+) ions to selectively pass through the pore, along their electrochemical gradient. The influx of Na+ ions provokes membrane depolarization, initiating the propagation of electrical signals throughout cells and tissues. This chain is Sodium channel protein type 4 subunit alpha B (scn4ab), found in Takifugu rubripes (Japanese pufferfish).